The sequence spans 808 residues: LisH domain-containing protein ARMC9 (808 aa).

The region spanning 7-39 (YEADLLGLVKEFLNFGEFQETLETFTKECKTKG) is the LisH domain. A coiled-coil region spans residues 196 to 230 (ITLYKESLHNNQELLQQLQQQLMETEHKARTYKKC). 3 disordered regions span residues 576-599 (FDES…DALE), 650-709 (PLQR…DYCV), and 742-808 (GMEK…SYRK). The segment covering 579–599 (SIESDDEEEEKDDEEDEDALE) has biased composition (acidic residues). 3 stretches are compositionally biased toward polar residues: residues 655 to 668 (VTPS…TVRK), 677 to 709 (TNTF…DYCV), and 775 to 784 (IAPQFSQSGP). Residues 785–808 (QQTSYSSSAGSSTRSRQSTQSYRK) show a composition bias toward low complexity.

It is found in the cytoplasm. The protein resides in the cytoskeleton. Its subcellular location is the cilium basal body. The protein localises to the cell projection. It localises to the cilium. It is found in the microtubule organizing center. The protein resides in the centrosome. Its subcellular location is the centriole. Functionally, involved in ciliogenesis. It is required for appropriate acetylation and polyglutamylation of ciliary microtubules, and regulation of cilium length. Acts as a positive regulator of hedgehog (Hh)signaling. The polypeptide is LisH domain-containing protein ARMC9 (armc9) (Xenopus tropicalis (Western clawed frog)).